The chain runs to 223 residues: Cytochrome c biogenesis ATP-binding export protein CcmA (223 aa).

An ABC transporter domain is found at 20–222 (LAAHALTYSR…PTRLLHLKKA (203 aa)). 52-59 (GPNGIGKT) contributes to the ATP binding site.

This sequence belongs to the ABC transporter superfamily. CcmA exporter (TC 3.A.1.107) family. As to quaternary structure, the complex is composed of two ATP-binding proteins (CcmA) and two transmembrane proteins (CcmB).

It localises to the cell inner membrane. It carries out the reaction heme b(in) + ATP + H2O = heme b(out) + ADP + phosphate + H(+). Part of the ABC transporter complex CcmAB involved in the biogenesis of c-type cytochromes; once thought to export heme, this seems not to be the case, but its exact role is uncertain. Responsible for energy coupling to the transport system. This chain is Cytochrome c biogenesis ATP-binding export protein CcmA, found in Xylella fastidiosa (strain 9a5c).